Here is a 305-residue protein sequence, read N- to C-terminus: 5'-hydroxyaverantin dehydrogenase stcG (305 aa).

NADP(+)-binding residues include Ser25, Leu27, Gln48, Asp68, Tyr186, Lys190, and Ser221. Tyr186 serves as the catalytic Proton acceptor. Catalysis depends on Lys190, which acts as the Lowers pKa of active site Tyr.

This sequence belongs to the short-chain dehydrogenases/reductases (SDR) family.

It carries out the reaction (1'S,5'S)-5'-hydroxyaverantin + NAD(+) = (S)-5'-oxoaverantin + NADH + H(+). The catalysed reaction is (1'S,5'R)-5'-hydroxyaverantin + NAD(+) = (S)-5'-oxoaverantin + NADH + 2 H(+). It participates in mycotoxin biosynthesis; sterigmatocystin biosynthesis. In terms of biological role, 5'-hydroxyaverantin dehydrogenase; part of the gene cluster that mediates the biosynthesis of sterigmatocystin (ST), a polyketide-derived furanocoumarin which is part of the most toxic and carcinogenic compounds among the known mycotoxins. The first step in the biosynthesis of sterigmatocystin is the production of hexanoate by the fatty acid synthase (FAS) units stcJ and stcK. The polyketide backbone is assembled by the non-reducing polyketide synthase stcA by condensation of the starter hexanoyl-CoA and 7 malonyl-CoA extender units followed by cyclization and release of norsolorinic acid. Norsolorinic acid is the first stable intermediate in the biosynthesis of sterigmatocystin and is converted into averantin (AVN) by the ketoreductase stcE which reduces the hexanoate ketone to an alcohol. Averantin is then oxidized into 5'-hydroxyaverantin (HAVN) by the cytochrome P450 monooxygenase stcF. 5'-hydroxyaverantin is further converted to 5'-oxyaverantin (OAVN) by the 5'-hydroxyaverantin dehydrogenase stcG. The next step is the conversion of OAVN into averufin (AVF) which is catalyzed by a yet to be identified enzyme. The cytochrome P450 monooxygenase stcB and the flavin-binding monooxygenase stcW are both required for the conversion of averufin to 1-hydroxyversicolorone. The esterase stcI probably catalyzes the formation of versiconal hemiacetal acetate from 1-hydroxyversicolorone. The oxydoreductase stcN then probably catalyzes the biosynthetic step from versiconal to versicolorin B (VERB). The next step is performed by the versicolorin B desaturase stcL to produce versicolorin A (VERA). The ketoreductase stcU and the cytochrome P450 monooxygenase stcS are involved in the conversion of versicolorin A to demethylsterigmatocystin. The Baeyer-Villiger oxidas stcQ and the reductase stcR might be involved in the biosynthetic step from versicolorin A to demethylsterigmatocystin. The final step in the biosynthesis of sterigmatocystin is the methylation of demethylsterigmatocystin catalyzed by the methyltransferase stcP. The polypeptide is 5'-hydroxyaverantin dehydrogenase stcG (Emericella nidulans (strain FGSC A4 / ATCC 38163 / CBS 112.46 / NRRL 194 / M139) (Aspergillus nidulans)).